A 273-amino-acid polypeptide reads, in one-letter code: Putative B3 domain-containing protein At5g58280 (273 aa).

Residues 127–218 (FVKSMVRSHV…KFKIYVFKGN (92 aa)) constitute a DNA-binding region (TF-B3). Positions 225 to 273 (SARKRGRATTPSEEEEEEEDKDVEESGDEEHSSRATKRSSVRLLRKRKA) are disordered. The span at 236–252 (SEEEEEEEDKDVEESGD) shows a compositional bias: acidic residues. A compositionally biased stretch (basic residues) spans 258–273 (RATKRSSVRLLRKRKA).

It is found in the nucleus. In Arabidopsis thaliana (Mouse-ear cress), this protein is Putative B3 domain-containing protein At5g58280.